We begin with the raw amino-acid sequence, 172 residues long: Male-specific submandibular salivary gland protein (172 aa).

The signal sequence occupies residues 1 to 15; the sequence is MVKFLLLALALGVSC. The N-linked (GlcNAc...) asparagine glycan is linked to N41. 2 disulfide bridges follow: C60-C64 and C79-C170.

Belongs to the calycin superfamily. Lipocalin family. N-glycosylated. As to expression, expressed in acinar cells of the submandibular salivary gland from where it is secreted into saliva (at protein level). Also released from the submandibular salivary gland into blood and excreted in urine (at protein level). Expressed in the lacrimal gland from where it is secreted into tears (at protein level).

It localises to the secreted. Its subcellular location is the cytoplasm. This is Male-specific submandibular salivary gland protein from Mesocricetus auratus (Golden hamster).